The primary structure comprises 337 residues: Protein ABHD13 (337 aa).

A helical; Signal-anchor for type II membrane protein transmembrane segment spans residues 37–57 (FHLYGGIILLLLIFISIAGIL). Residues S193, D268, and H298 each act as charge relay system in the active site. A glycan (N-linked (GlcNAc...) asparagine) is linked at N299.

It belongs to the serine esterase family.

Its subcellular location is the membrane. The sequence is that of Protein ABHD13 from Homo sapiens (Human).